Reading from the N-terminus, the 316-residue chain is Ribosomal RNA small subunit methyltransferase H (316 aa).

S-adenosyl-L-methionine contacts are provided by residues 35–37 (GGH), aspartate 55, tyrosine 79, aspartate 100, and glutamine 107.

This sequence belongs to the methyltransferase superfamily. RsmH family.

It is found in the cytoplasm. The enzyme catalyses cytidine(1402) in 16S rRNA + S-adenosyl-L-methionine = N(4)-methylcytidine(1402) in 16S rRNA + S-adenosyl-L-homocysteine + H(+). Its function is as follows. Specifically methylates the N4 position of cytidine in position 1402 (C1402) of 16S rRNA. This Nitrosospira multiformis (strain ATCC 25196 / NCIMB 11849 / C 71) protein is Ribosomal RNA small subunit methyltransferase H.